A 253-amino-acid polypeptide reads, in one-letter code: Phosphoadenosine 5'-phosphosulfate reductase (253 aa).

Cys239 functions as the Nucleophile; cysteine thiosulfonate intermediate in the catalytic mechanism.

It belongs to the PAPS reductase family. CysH subfamily.

It is found in the cytoplasm. The enzyme catalyses [thioredoxin]-disulfide + sulfite + adenosine 3',5'-bisphosphate + 2 H(+) = [thioredoxin]-dithiol + 3'-phosphoadenylyl sulfate. It functions in the pathway sulfur metabolism; hydrogen sulfide biosynthesis; sulfite from sulfate: step 3/3. Catalyzes the formation of sulfite from phosphoadenosine 5'-phosphosulfate (PAPS) using thioredoxin as an electron donor. This is Phosphoadenosine 5'-phosphosulfate reductase from Aliivibrio salmonicida (strain LFI1238) (Vibrio salmonicida (strain LFI1238)).